Here is a 283-residue protein sequence, read N- to C-terminus: Protease HtpX (283 aa).

Transmembrane regions (helical) follow at residues 4-24 (IALF…ILSV) and 33-53 (GGIL…SLFM). Histidine 139 is a Zn(2+) binding site. Glutamate 140 is an active-site residue. Histidine 143 serves as a coordination point for Zn(2+). The next 2 membrane-spanning stretches (helical) occupy residues 147 to 167 (GDMV…IFLS) and 192 to 212 (FLVS…IAMW). Glutamate 218 contributes to the Zn(2+) binding site.

Belongs to the peptidase M48B family. Zn(2+) serves as cofactor.

The protein localises to the cell inner membrane. This Glaesserella parasuis serovar 5 (strain SH0165) (Haemophilus parasuis) protein is Protease HtpX.